The sequence spans 621 residues: Chaperone protein HtpG (621 aa).

The tract at residues methionine 1–arginine 325 is a; substrate-binding. A b region spans residues glutamate 326–arginine 541. The segment at methionine 542–leucine 621 is c.

Belongs to the heat shock protein 90 family. Homodimer.

The protein localises to the cytoplasm. Molecular chaperone. Has ATPase activity. This Roseobacter denitrificans (strain ATCC 33942 / OCh 114) (Erythrobacter sp. (strain OCh 114)) protein is Chaperone protein HtpG.